The sequence spans 230 residues: Ribonuclease 3 (230 aa).

The RNase III domain occupies 6–135 (VSELRARYGI…FNGALFLDQG (130 aa)). Residue Glu-48 participates in Mg(2+) binding. Asp-52 is an active-site residue. The Mg(2+) site is built by Asp-121 and Glu-124. The active site involves Glu-124. The DRBM domain occupies 161-230 (DYKTNLQEFL…AKKALEQLKA (70 aa)).

The protein belongs to the ribonuclease III family. Homodimer. Mg(2+) is required as a cofactor.

It localises to the cytoplasm. The catalysed reaction is Endonucleolytic cleavage to 5'-phosphomonoester.. In terms of biological role, digests double-stranded RNA. Involved in the processing of primary rRNA transcript to yield the immediate precursors to the large and small rRNAs (23S and 16S). Processes some mRNAs, and tRNAs when they are encoded in the rRNA operon. Processes pre-crRNA and tracrRNA of type II CRISPR loci if present in the organism. This chain is Ribonuclease 3, found in Latilactobacillus sakei subsp. sakei (strain 23K) (Lactobacillus sakei subsp. sakei).